A 261-amino-acid chain; its full sequence is Small ribosomal subunit protein eS1 (261 aa).

Residues 1 to 18 (MAVGKNKRISKGKKGGKK) show a composition bias toward basic residues. The segment at 1–23 (MAVGKNKRISKGKKGGKKKAADP) is disordered.

Belongs to the eukaryotic ribosomal protein eS1 family. Component of the small ribosomal subunit. Mature ribosomes consist of a small (40S) and a large (60S) subunit. The 40S subunit contains about 33 different proteins and 1 molecule of RNA (18S). The 60S subunit contains about 49 different proteins and 3 molecules of RNA (25S, 5.8S and 5S).

The protein resides in the cytoplasm. This chain is Small ribosomal subunit protein eS1 (cyc07), found in Nicotiana tabacum (Common tobacco).